Here is a 224-residue protein sequence, read N- to C-terminus: (S)-2-haloacid dehalogenase H-109 (224 aa).

The Nucleophile role is filled by D10. Residues 11–12 (LY), R41, and 118–119 (SN) each bind an (S)-2-haloacid. The segment at 175-180 (SSNSWD) is important for catalytic activity.

It belongs to the HAD-like hydrolase superfamily. S-2-haloalkanoic acid dehalogenase family.

The enzyme catalyses an (S)-2-haloacid + H2O = a (2R)-2-hydroxycarboxylate + a halide anion + H(+). It carries out the reaction (S)-2-chloropropanoate + H2O = (R)-lactate + chloride + H(+). Functionally, catalyzes the hydrolytic dehalogenation of small (S)-2-haloalkanoic acids to yield the corresponding (R)-2-hydroxyalkanoic acids. Acts on acids of short chain lengths, C(2) to C(4), with inversion of configuration at C-2. Active with 2-halogenated carboxylic acids and converts only the S-isomer (or L-isomer) of 2-chloropropionic acid with inversion of configuration to produce R-lactate (or D-isomer). This Pseudomonas putida (Arthrobacter siderocapsulatus) protein is (S)-2-haloacid dehalogenase H-109.